A 1480-amino-acid chain; its full sequence is Cystic fibrosis transmembrane conductance regulator (1480 aa).

Topologically, residues 1–77 are cytoplasmic; sequence MQRSPLEKAS…KLINALRRCF (77 aa). The helical transmembrane segment at 78-98 threads the bilayer; sequence FWRFMFYGILLYLGEVTKAVQ. Residues 81 to 365 form the ABC transmembrane type-1 1 domain; it reads FMFYGILLYL…WAVQTWYDSL (285 aa). Over 99-122 the chain is Extracellular; that stretch reads PLLLGRIIASYDPDNKTERSIAIY. A helical transmembrane segment spans residues 123–146; sequence LGIGLCLLFIVRTLLLHPAIFGLH. Over 147–195 the chain is Cytoplasmic; sequence HIGMQMRIAMFSLIYKKTLKLSSRVLDKISIGQLVSLLSNNLNKFDEGL. Residues 196 to 216 traverse the membrane as a helical segment; sequence ALAHFVWIAPLQVALLMGLIW. Residues 217–222 lie on the Extracellular side of the membrane; the sequence is ELLQAS. A helical transmembrane segment spans residues 223 to 243; that stretch reads VFCGLGFLIVLALFQAGLGRM. At 244–298 the chain is on the cytoplasmic side; that stretch reads MMKYRDQRAGKINERLVITSEMIENIQSVKAYCWEEAMEKMIENLRQTELKLTRK. The chain crosses the membrane as a helical span at residues 299-319; it reads AAYVRYFNSSAFFFSGFFVVF. The Extracellular segment spans residues 320 to 339; the sequence is LSVLPYALIKGIILRKIFTT. The chain crosses the membrane as a helical span at residues 340–358; that stretch reads ISFCIVLRMAVTRQFPWAV. Topologically, residues 359-858 are cytoplasmic; it reads QTWYDSLGAI…YLRYITLHKS (500 aa). Residues Trp-401, Ser-434, 458-465, and Gln-493 contribute to the ATP site; that span reads GSTGAGKT. One can recognise an ABC transporter 1 domain in the interval 423 to 646; the sequence is NGHDNLFFSN…RPDFSSKLMG (224 aa). A lipid anchor (S-palmitoyl cysteine) is attached at Cys-524. 2 positions are modified to phosphoserine: Ser-549 and Ser-660. The segment at 654–831 is disordered R region; that stretch reads SSERRNSILT…EEINEEDLKE (178 aa). Residue Ser-670 is modified to Phosphoserine; by PKA. Position 686 is a phosphoserine (Ser-686). Lys-688 participates in a covalent cross-link: Glycyl lysine isopeptide (Lys-Gly) (interchain with G-Cter in ubiquitin). A phosphoserine mark is found at Ser-700 and Ser-712. The residue at position 717 (Thr-717) is a Phosphothreonine. 6 positions are modified to phosphoserine: Ser-737, Ser-753, Ser-768, Ser-790, Ser-795, and Ser-813. A helical membrane pass occupies residues 859–879; it reads LIFVLIWCLVIFLAEVAASLV. Residues 859-1155 enclose the ABC transmembrane type-1 2 domain; it reads LIFVLIWCLV…AVNSSIDVDS (297 aa). The Extracellular portion of the chain corresponds to 880 to 918; it reads VLWLLGNTSFQDKGNSTYSRNNSYAVIITNTSSYYVFYI. 3 N-linked (GlcNAc...) asparagine glycosylation sites follow: Asn-894, Asn-900, and Asn-909. Residues 919 to 939 form a discontinuously helical membrane-spanning segment; the sequence is YVGVADTLLALGFFRGLPLVH. The Cytoplasmic portion of the chain corresponds to 940–990; the sequence is TLITVSKILHHKMLHSVLQAPMSTLNTLKAGGILNRFSKDIAILDDLLPLT. Residues 991 to 1011 form a helical membrane-spanning segment; it reads IFDFIQLLLIVIGAIAVVSVL. At 1012-1013 the chain is on the extracellular side; that stretch reads QP. The chain crosses the membrane as a helical span at residues 1014–1034; the sequence is YIFLATVPVIAAFILLRAYFL. Residues 1035-1095 are Cytoplasmic-facing; sequence QTSQQLKQLE…TANWFLYLST (61 aa). The chain crosses the membrane as a helical span at residues 1096–1116; it reads LRWFQMRIEMIFVIFFIAVTF. The Extracellular portion of the chain corresponds to 1117-1130; sequence ISILTTGEGEGTVG. The helical transmembrane segment at 1131–1151 threads the bilayer; it reads IILTLAMNIMSTLQWAVNSSI. Residues 1152 to 1480 lie on the Cytoplasmic side of the membrane; it reads DVDSLMRSVS…TEEEVQETRL (329 aa). The ABC transporter 2 domain occupies 1210 to 1443; the sequence is MTIKDLTAKY…KSLFQQAISH (234 aa). Residues Tyr-1219 and 1244-1251 contribute to the ATP site; that span reads GRTGSGKS. The tract at residues 1386 to 1480 is interaction with GORASP2; it reads RALKQAFADC…TEEEVQETRL (95 aa). The S-palmitoyl cysteine moiety is linked to residue Cys-1395. Ser-1444 and Ser-1456 each carry phosphoserine. Positions 1452–1480 are disordered; sequence HRNSSKYKSRPQIASLKEETEEEVQETRL. The segment covering 1470–1480 has biased composition (acidic residues); it reads ETEEEVQETRL. Residues 1478–1480 carry the PDZ-binding motif; the sequence is TRL.

This sequence belongs to the ABC transporter superfamily. ABCC family. CFTR transporter (TC 3.A.1.202) subfamily. As to quaternary structure, monomer; does not require oligomerization for channel activity. May form oligomers in the membrane. Interacts with SLC26A3, SLC26A6 and NHERF1. Interacts with SHANK2. Interacts with MYO6. Interacts (via C-terminus) with GOPC (via PDZ domain); this promotes CFTR internalization and thereby decreases channel activity. Interacts with SLC4A7 through NHERF1. Found in a complex with MYO5B and RAB11A. Interacts with ANO1. Interacts with SLC26A8. Interacts with AHCYL1; the interaction increases CFTR activity. Interacts with CSE1L. The core-glycosylated form interacts with GORASP2 (via PDZ GRASP-type 1 domain) in respone to ER stress. Interacts with MARCHF2; the interaction leads to CFTR ubiqtuitination and degradation. Interacts with ADGRG2. In terms of processing, N-glycosylated. Post-translationally, phosphorylated; cAMP treatment promotes phosphorylation and activates the channel. Dephosphorylation decreases the ATPase activity (in vitro). Phosphorylation at PKA sites activates the channel. Phosphorylation at PKC sites enhances the response to phosphorylation by PKA. Phosphorylated by AMPK; this inhibits channel activity. Ubiquitinated, leading to its degradation in the lysosome. Deubiquitination by USP10 in early endosomes enhances its endocytic recycling to the cell membrane. Ubiquitinated by RNF185 during ER stress. Ubiquitinated by MARCHF2.

The protein resides in the apical cell membrane. It is found in the early endosome membrane. The protein localises to the cell membrane. It localises to the recycling endosome membrane. Its subcellular location is the endoplasmic reticulum membrane. The protein resides in the nucleus. It carries out the reaction ATP + H2O + closed Cl(-) channel = ADP + phosphate + open Cl(-) channel.. The catalysed reaction is chloride(in) = chloride(out). It catalyses the reaction hydrogencarbonate(in) = hydrogencarbonate(out). The enzyme catalyses ATP + H2O = ADP + phosphate + H(+). In terms of biological role, epithelial ion channel that plays an important role in the regulation of epithelial ion and water transport and fluid homeostasis. Mediates the transport of chloride ions across the cell membrane. Possesses an intrinsic ATPase activity and utilizes ATP to gate its channel; the passive flow of anions through the channel is gated by cycles of ATP binding and hydrolysis by the ATP-binding domains. The ion channel is also permeable to HCO(3)(-); selectivity depends on the extracellular chloride concentration. Exerts its function also by modulating the activity of other ion channels and transporters. Contributes to the regulation of the pH and the ion content of the epithelial fluid layer. Modulates the activity of the epithelial sodium channel (ENaC) complex, in part by regulating the cell surface expression of the ENaC complex. May regulate bicarbonate secretion and salvage in epithelial cells by regulating the transporter SLC4A7. Can inhibit the chloride channel activity of ANO1. Plays a role in the chloride and bicarbonate homeostasis during sperm epididymal maturation and capacitation. This Plecturocebus moloch (Dusky titi monkey) protein is Cystic fibrosis transmembrane conductance regulator.